A 1481-amino-acid chain; its full sequence is Cystic fibrosis transmembrane conductance regulator (1481 aa).

Residues Met-1–Phe-77 lie on the Cytoplasmic side of the membrane. The helical transmembrane segment at Phe-78 to Gln-98 threads the bilayer. The 285-residue stretch at Phe-81 to Leu-365 folds into the ABC transmembrane type-1 1 domain. The Extracellular portion of the chain corresponds to Pro-99–Tyr-122. Residues Leu-123 to His-146 form a helical membrane-spanning segment. The Cytoplasmic segment spans residues His-147 to Leu-195. A helical transmembrane segment spans residues Ala-196 to Trp-216. The Extracellular segment spans residues Glu-217–Ser-222. Residues Ala-223–Met-243 form a helical membrane-spanning segment. At Met-244–Lys-298 the chain is on the cytoplasmic side. The helical transmembrane segment at Ala-299–Phe-319 threads the bilayer. Topologically, residues Leu-320–Thr-339 are extracellular. The helical transmembrane segment at Ile-340–Val-358 threads the bilayer. Topologically, residues Gln-359–Ser-858 are cytoplasmic. ATP contacts are provided by residues Trp-401, Ser-434, Gly-458–Thr-465, and Gln-493. The 224-residue stretch at Asn-423 to Gly-646 folds into the ABC transporter 1 domain. Cys-524 carries the S-palmitoyl cysteine lipid modification. Phosphoserine is present on residues Ser-549 and Ser-660. Residues Ser-654–Glu-831 form a disordered R region region. Ser-670 bears the Phosphoserine; by PKA mark. Phosphoserine is present on Ser-686. Lys-688 is covalently cross-linked (Glycyl lysine isopeptide (Lys-Gly) (interchain with G-Cter in ubiquitin)). Ser-700 and Ser-712 each carry phosphoserine. Thr-717 is subject to Phosphothreonine. Phosphoserine is present on residues Ser-737, Ser-753, Ser-768, Ser-790, Ser-795, and Ser-813. The helical transmembrane segment at Leu-859 to Val-879 threads the bilayer. One can recognise an ABC transmembrane type-1 2 domain in the interval Leu-859–Ser-1155. The Extracellular portion of the chain corresponds to Val-880 to Ile-918. 3 N-linked (GlcNAc...) asparagine glycosylation sites follow: Asn-894, Asn-900, and Asn-909. The chain crosses the membrane as a discontinuously helical span at residues Tyr-919–His-939. At Thr-940 to Thr-990 the chain is on the cytoplasmic side. A helical membrane pass occupies residues Ile-991–Leu-1011. The Extracellular portion of the chain corresponds to Gln-1012–Pro-1013. Residues Tyr-1014–Leu-1034 form a helical membrane-spanning segment. Residues Gln-1035–Thr-1095 are Cytoplasmic-facing. A helical transmembrane segment spans residues Leu-1096–Phe-1116. Residues Ile-1117–Gly-1130 lie on the Extracellular side of the membrane. The chain crosses the membrane as a helical span at residues Ile-1131–Ile-1151. Residues Asp-1152–Leu-1481 are Cytoplasmic-facing. One can recognise an ABC transporter 2 domain in the interval Met-1211–His-1444. ATP is bound by residues Tyr-1220 and Gly-1245–Ser-1252. The segment at Arg-1387–Leu-1481 is interaction with GORASP2. Cys-1396 is lipidated: S-palmitoyl cysteine. Ser-1445 and Ser-1457 each carry phosphoserine. Positions His-1453–Leu-1481 are disordered. The span at Glu-1471–Leu-1481 shows a compositional bias: acidic residues. The PDZ-binding motif lies at Thr-1479–Leu-1481.

The protein belongs to the ABC transporter superfamily. ABCC family. CFTR transporter (TC 3.A.1.202) subfamily. In terms of assembly, monomer; does not require oligomerization for channel activity. May form oligomers in the membrane. Interacts with SLC26A3, SLC26A6 and NHERF1. Interacts with SHANK2. Interacts with MYO6. Interacts (via C-terminus) with GOPC (via PDZ domain); this promotes CFTR internalization and thereby decreases channel activity. Interacts with SLC4A7 through NHERF1. Found in a complex with MYO5B and RAB11A. Interacts with ANO1. Interacts with SLC26A8. Interacts with AHCYL1; the interaction increases CFTR activity. Interacts with CSE1L. The core-glycosylated form interacts with GORASP2 (via PDZ GRASP-type 1 domain) in respone to ER stress. Interacts with MARCHF2; the interaction leads to CFTR ubiqtuitination and degradation. Interacts with ADGRG2. Post-translationally, N-glycosylated. In terms of processing, phosphorylated; cAMP treatment promotes phosphorylation and activates the channel. Dephosphorylation decreases the ATPase activity (in vitro). Phosphorylation at PKA sites activates the channel. Phosphorylation at PKC sites enhances the response to phosphorylation by PKA. Phosphorylated by AMPK; this inhibits channel activity. Ubiquitinated, leading to its degradation in the lysosome. Deubiquitination by USP10 in early endosomes enhances its endocytic recycling to the cell membrane. Ubiquitinated by RNF185 during ER stress. Ubiquitinated by MARCHF2.

Its subcellular location is the apical cell membrane. It is found in the early endosome membrane. The protein resides in the cell membrane. The protein localises to the recycling endosome membrane. It localises to the endoplasmic reticulum membrane. Its subcellular location is the nucleus. It carries out the reaction ATP + H2O + closed Cl(-) channel = ADP + phosphate + open Cl(-) channel.. It catalyses the reaction chloride(in) = chloride(out). The catalysed reaction is hydrogencarbonate(in) = hydrogencarbonate(out). The enzyme catalyses ATP + H2O = ADP + phosphate + H(+). Epithelial ion channel that plays an important role in the regulation of epithelial ion and water transport and fluid homeostasis. Mediates the transport of chloride ions across the cell membrane. Possesses an intrinsic ATPase activity and utilizes ATP to gate its channel; the passive flow of anions through the channel is gated by cycles of ATP binding and hydrolysis by the ATP-binding domains. The ion channel is also permeable to HCO(3)(-); selectivity depends on the extracellular chloride concentration. Exerts its function also by modulating the activity of other ion channels and transporters. Contributes to the regulation of the pH and the ion content of the epithelial fluid layer. Modulates the activity of the epithelial sodium channel (ENaC) complex, in part by regulating the cell surface expression of the ENaC complex. May regulate bicarbonate secretion and salvage in epithelial cells by regulating the transporter SLC4A7. Can inhibit the chloride channel activity of ANO1. Plays a role in the chloride and bicarbonate homeostasis during sperm epididymal maturation and capacitation. This is Cystic fibrosis transmembrane conductance regulator from Aotus nancymaae (Ma's night monkey).